We begin with the raw amino-acid sequence, 130 residues long: Anti-adapter protein IraD (130 aa).

It belongs to the GpW/Gp25 family. IraD subfamily. In terms of assembly, interacts with RssB.

Its subcellular location is the cytoplasm. In terms of biological role, inhibits RpoS proteolysis by regulating RssB activity, thereby increasing the stability of the sigma stress factor RpoS during oxidative stress. Its effect on RpoS stability is due to its interaction with RssB, which probably blocks the interaction of RssB with RpoS, and the consequent delivery of the RssB-RpoS complex to the ClpXP protein degradation pathway. This is Anti-adapter protein IraD from Escherichia coli (strain K12 / MC4100 / BW2952).